The following is a 246-amino-acid chain: 3'(2'),5'-bisphosphate nucleotidase CysQ (246 aa).

E64, D83, L85, D86, and D205 together coordinate Mg(2+). E64 contributes to the substrate binding site. Substrate contacts are provided by residues 85-88 (LDGT) and D205.

It belongs to the inositol monophosphatase superfamily. CysQ family. Mg(2+) is required as a cofactor.

Its subcellular location is the cell inner membrane. It catalyses the reaction adenosine 3',5'-bisphosphate + H2O = AMP + phosphate. Its function is as follows. Converts adenosine-3',5'-bisphosphate (PAP) to AMP. In Escherichia coli O6:H1 (strain CFT073 / ATCC 700928 / UPEC), this protein is 3'(2'),5'-bisphosphate nucleotidase CysQ.